Here is a 257-residue protein sequence, read N- to C-terminus: Beta-fibrinogenase mucrofibrase-3 (257 aa).

The signal sequence occupies residues 1–18 (MVLIRVLANLLILQLSYA). Residues 19 to 24 (QKSSEL) constitute a propeptide that is removed on maturation. Residues 25 to 248 (VIGGDECNIN…HLDWIKGIIA (224 aa)) enclose the Peptidase S1 domain. 6 disulfides stabilise this stretch: Cys31-Cys162, Cys49-Cys65, Cys97-Cys255, Cys141-Cys209, Cys173-Cys188, and Cys199-Cys224. Catalysis depends on charge relay system residues His64 and Asp109. Ser203 serves as the catalytic Charge relay system.

This sequence belongs to the peptidase S1 family. Snake venom subfamily. As to quaternary structure, monomer. As to expression, expressed by the venom gland.

Its subcellular location is the secreted. Its function is as follows. Snake venom serine protease with fibrinogenolytic activities. Cleaves beta-chain of fibrinogen (FGB) efficiently and shows relatively lower activity on alpha-chain. This Protobothrops mucrosquamatus (Taiwan habu) protein is Beta-fibrinogenase mucrofibrase-3.